The following is a 424-amino-acid chain: MASGDGGDDAGVKRVADRYLKREVLGEGTYGVVFKADDTKTGNTVAIKKIRLGKYKEGVNFTALREIKLLKELKDSNIIELIDAFPYKGNLHLVFEFMETDLEAVIRDRNIVLSPADTKSYIQMMLKGLAFCHKKWVLHRDMKPNNLLIGADGQLKLADFGLARIFGSPERNFTHQVFARWYRAPELLFGTKQYGSAVDIWAAGCIFAELLLRRPFLQGSSDIDQLGKIFAAFGTPKSSQWPDMVYLPDYVEYQFVSAPPLRSLFPMASDDALDLLSRMFTYDPKARITAQQALEHRYFLSVPAPTKPSQLPRPPPKGDSGNNKIPDLNLQDGPVVLSPPRKLRRVTAHEGMEVHMHRADRTEEHPSGARHMDDMSSQSSRIPMSVDVGAIFGTRPAPRPTLNSADKSRLKRKLDMDPEFGYTE.

The Protein kinase domain occupies Tyr19–Phe299. Residues Leu25–Val33 and Lys48 each bind ATP. At Thr29 the chain carries Phosphothreonine. Tyr30 carries the phosphotyrosine modification. Asp141 functions as the Proton acceptor in the catalytic mechanism. Ser168 bears the Phosphoserine mark. Thr174 is modified (phosphothreonine). 2 disordered regions span residues Pro303–Leu337 and Ala359–Glu424. Over residues Ala359–Asp374 the composition is skewed to basic and acidic residues.

Belongs to the protein kinase superfamily. CMGC Ser/Thr protein kinase family. CDC2/CDKX subfamily.

Its subcellular location is the nucleus. The catalysed reaction is L-seryl-[protein] + ATP = O-phospho-L-seryl-[protein] + ADP + H(+). It catalyses the reaction L-threonyl-[protein] + ATP = O-phospho-L-threonyl-[protein] + ADP + H(+). It carries out the reaction [DNA-directed RNA polymerase] + ATP = phospho-[DNA-directed RNA polymerase] + ADP + H(+). The polypeptide is Cyclin-dependent kinase D-1 (CDKD-1) (Oryza sativa subsp. indica (Rice)).